The primary structure comprises 77 residues: MEVIRIFNKVAERLDKEAAIRIFVLAHQLERDKLIRLLQGLLWRLRFRKPKSKDCLCWFCCRLYYWQLQSTLSIDTA.

A Nuclear export signal motif is present at residues 34–42 (LIRLLQGLL). The Nuclear localization signal motif lies at 44–53 (RLRFRKPKSK).

The protein resides in the virion. The protein localises to the host nucleus. Functionally, seems to function as a Vpr-like protein, since it mediates host cell cycle arrest in G2 phase. Cell cycle arrest creates a favorable environment for maximizing viral expression and production. This is Probable Vpr-like protein from Felidae (cat family).